Here is a 616-residue protein sequence, read N- to C-terminus: Homeodomain-interacting protein kinase 4 (616 aa).

The Protein kinase domain occupies tyrosine 11–valine 347. ATP contacts are provided by residues leucine 17–valine 25 and lysine 40. Catalysis depends on aspartate 136, which acts as the Proton acceptor. Residues histidine 487–histidine 616 are disordered. Residues lysine 497–serine 512 show a composition bias toward polar residues. Serine 512 is modified (phosphoserine). A compositionally biased stretch (basic and acidic residues) spans arginine 542 to glycine 560.

Belongs to the protein kinase superfamily. CMGC Ser/Thr protein kinase family. HIPK subfamily. Autophosphorylated. In terms of tissue distribution, expressed at moderate levels in lung and white adipose tissues and weakly in brain and liver.

It is found in the cytoplasm. The catalysed reaction is L-seryl-[protein] + ATP = O-phospho-L-seryl-[protein] + ADP + H(+). It catalyses the reaction L-threonyl-[protein] + ATP = O-phospho-L-threonyl-[protein] + ADP + H(+). In terms of biological role, protein kinase that phosphorylates murine TP53 at Ser-9, and thus induces TP53 repression of BIRC5 promoter. May act as a corepressor of transcription factors (Potential). This is Homeodomain-interacting protein kinase 4 (Hipk4) from Mus musculus (Mouse).